Consider the following 118-residue polypeptide: Mitochondrial protein YPR099C (118 aa).

It is found in the mitochondrion. Essential for the functional mitochondria and respiratory growth. The polypeptide is Mitochondrial protein YPR099C (Saccharomyces cerevisiae (strain ATCC 204508 / S288c) (Baker's yeast)).